Consider the following 498-residue polypeptide: Glycerol kinase (498 aa).

Thr12 provides a ligand contact to ADP. The ATP site is built by Thr12, Thr13, and Ser14. Thr12 provides a ligand contact to sn-glycerol 3-phosphate. Residue Arg16 participates in ADP binding. Positions 82, 83, 134, and 243 each coordinate sn-glycerol 3-phosphate. The glycerol site is built by Arg82, Glu83, Tyr134, Asp243, and Gln244. ADP-binding residues include Thr265 and Gly308. The ATP site is built by Thr265, Gly308, Gln312, and Gly409. Residues Gly409 and Asn413 each contribute to the ADP site.

It belongs to the FGGY kinase family.

It carries out the reaction glycerol + ATP = sn-glycerol 3-phosphate + ADP + H(+). Its pathway is polyol metabolism; glycerol degradation via glycerol kinase pathway; sn-glycerol 3-phosphate from glycerol: step 1/1. With respect to regulation, inhibited by fructose 1,6-bisphosphate (FBP). Functionally, key enzyme in the regulation of glycerol uptake and metabolism. Catalyzes the phosphorylation of glycerol to yield sn-glycerol 3-phosphate. This is Glycerol kinase from Petrotoga mobilis (strain DSM 10674 / SJ95).